Consider the following 98-residue polypeptide: NADH-ubiquinone oxidoreductase chain 4L (98 aa).

3 helical membrane-spanning segments follow: residues 1-21 (MTPL…GVLI), 28-48 (STLL…SLLI), and 59-79 (APLI…ALLV).

The protein belongs to the complex I subunit 4L family. Core subunit of respiratory chain NADH dehydrogenase (Complex I) which is composed of 45 different subunits.

The protein resides in the mitochondrion inner membrane. It carries out the reaction a ubiquinone + NADH + 5 H(+)(in) = a ubiquinol + NAD(+) + 4 H(+)(out). In terms of biological role, core subunit of the mitochondrial membrane respiratory chain NADH dehydrogenase (Complex I) which catalyzes electron transfer from NADH through the respiratory chain, using ubiquinone as an electron acceptor. Part of the enzyme membrane arm which is embedded in the lipid bilayer and involved in proton translocation. In Tarsipes rostratus (Honey possum), this protein is NADH-ubiquinone oxidoreductase chain 4L (MT-ND4L).